A 246-amino-acid chain; its full sequence is Probable transcriptional regulatory protein Ent638_2432 (246 aa).

It belongs to the TACO1 family.

It localises to the cytoplasm. This chain is Probable transcriptional regulatory protein Ent638_2432, found in Enterobacter sp. (strain 638).